The following is a 414-amino-acid chain: Esterase FrsA (414 aa).

It belongs to the FrsA family.

It carries out the reaction a carboxylic ester + H2O = an alcohol + a carboxylate + H(+). Its function is as follows. Catalyzes the hydrolysis of esters. The chain is Esterase FrsA from Shigella boydii serotype 4 (strain Sb227).